A 334-amino-acid polypeptide reads, in one-letter code: Probable fructose-bisphosphate aldolase class 1 (334 aa).

Belongs to the class I fructose-bisphosphate aldolase family.

It catalyses the reaction beta-D-fructose 1,6-bisphosphate = D-glyceraldehyde 3-phosphate + dihydroxyacetone phosphate. It functions in the pathway carbohydrate degradation; glycolysis; D-glyceraldehyde 3-phosphate and glycerone phosphate from D-glucose: step 4/4. The sequence is that of Probable fructose-bisphosphate aldolase class 1 from Xylella fastidiosa (strain 9a5c).